The following is a 437-amino-acid chain: MTNYFDKIEKVNYEGADSINPFAYKYYNANEVILGKTMADHLRLAVCYWHTFCWNGNDMFGVGSLDRSWQKQTDPLAGAKQKADIAFEFLTKLGVPYYCFHDVDIAPEGNSYQEYVNNFNTIVDVLEQKQAETGIKLLWGTANCFTNPRYMSGAATNPNPEIFARAGAQVFNAMNATKRLGGENYVLWGGREGYETLLNTDLRREREQIGRFMQMVVEHKHKIGFKGTLLIEPKPQEPTKHQYDYDVATVYGFLKQFGLEKEIKVNIEANHATLAGHTFQHEIATAAALDILGSIDANRGDPQLGWDTDQFPNSVEENTLAIYEILKAGGLTTGGLNFDAKIRRQSIDPYDLFHAHIGAIDVLALSLRRAAKMLEDQTLQHIVEQRYAGWNGELGQQILNGKSSLEALAQAAQHLEPQPVSGQQEYLENLVNSYIYR.

Catalysis depends on residues His-101 and Asp-104. Mg(2+)-binding residues include Glu-232, Glu-268, His-271, Asp-296, Asp-307, Asp-309, and Asp-339.

This sequence belongs to the xylose isomerase family. In terms of assembly, homotetramer. It depends on Mg(2+) as a cofactor.

The protein localises to the cytoplasm. It carries out the reaction alpha-D-xylose = alpha-D-xylulofuranose. This is Xylose isomerase from Actinobacillus succinogenes (strain ATCC 55618 / DSM 22257 / CCUG 43843 / 130Z).